A 346-amino-acid chain; its full sequence is Tetraacyldisaccharide 4'-kinase (346 aa).

Residue 54-61 participates in ATP binding; that stretch reads TVGGAGKT.

This sequence belongs to the LpxK family.

The enzyme catalyses a lipid A disaccharide + ATP = a lipid IVA + ADP + H(+). It participates in glycolipid biosynthesis; lipid IV(A) biosynthesis; lipid IV(A) from (3R)-3-hydroxytetradecanoyl-[acyl-carrier-protein] and UDP-N-acetyl-alpha-D-glucosamine: step 6/6. In terms of biological role, transfers the gamma-phosphate of ATP to the 4'-position of a tetraacyldisaccharide 1-phosphate intermediate (termed DS-1-P) to form tetraacyldisaccharide 1,4'-bis-phosphate (lipid IVA). This Sinorhizobium medicae (strain WSM419) (Ensifer medicae) protein is Tetraacyldisaccharide 4'-kinase.